The sequence spans 706 residues: Glutamine-dependent NAD(+) synthetase (706 aa).

The 271-residue stretch at 5–275 (VTVATCALNQ…VEVLTATLDL (271 aa)) folds into the CN hydrolase domain. Catalysis depends on glutamate 45, which acts as the Proton acceptor; for glutaminase activity. Lysine 114 acts as the For glutaminase activity in catalysis. Cysteine 175 serves as the catalytic Nucleophile; for glutaminase activity. A ligase region spans residues 325–706 (YHSPEEEISL…AAPQSLDGVD (382 aa)). 355–362 (PLSGGVDS) lines the ATP pocket. Serine 357 is an active-site residue.

The protein in the C-terminal section; belongs to the NAD synthetase family. Homohexamer.

It carries out the reaction deamido-NAD(+) + L-glutamine + ATP + H2O = L-glutamate + AMP + diphosphate + NAD(+) + H(+). It functions in the pathway cofactor biosynthesis; NAD(+) biosynthesis; NAD(+) from deamido-NAD(+) (L-Gln route): step 1/1. Its function is as follows. Catalyzes the final step of the nicotinamide adenine dinucleotide (NAD) de novo synthesis pathway, the ATP-dependent amidation of deamido-NAD using L-glutamine as a nitrogen source. This Macaca fascicularis (Crab-eating macaque) protein is Glutamine-dependent NAD(+) synthetase (NADSYN1).